Here is a 327-residue protein sequence, read N- to C-terminus: Phenylalanine--tRNA ligase alpha subunit (327 aa).

Position 252 (Glu-252) interacts with Mg(2+).

Belongs to the class-II aminoacyl-tRNA synthetase family. Phe-tRNA synthetase alpha subunit type 1 subfamily. In terms of assembly, tetramer of two alpha and two beta subunits. It depends on Mg(2+) as a cofactor.

It is found in the cytoplasm. It carries out the reaction tRNA(Phe) + L-phenylalanine + ATP = L-phenylalanyl-tRNA(Phe) + AMP + diphosphate + H(+). This is Phenylalanine--tRNA ligase alpha subunit from Cronobacter sakazakii (strain ATCC BAA-894) (Enterobacter sakazakii).